The following is a 386-amino-acid chain: ATP phosphoribosyltransferase regulatory subunit (386 aa).

Belongs to the class-II aminoacyl-tRNA synthetase family. HisZ subfamily. Heteromultimer composed of HisG and HisZ subunits.

It localises to the cytoplasm. Its pathway is amino-acid biosynthesis; L-histidine biosynthesis; L-histidine from 5-phospho-alpha-D-ribose 1-diphosphate: step 1/9. Functionally, required for the first step of histidine biosynthesis. May allow the feedback regulation of ATP phosphoribosyltransferase activity by histidine. This is ATP phosphoribosyltransferase regulatory subunit from Variovorax paradoxus (strain S110).